Consider the following 525-residue polypeptide: Lysine--tRNA ligase (525 aa).

Residues 40 to 48 (ASGIPHMGS) carry the 'HIGH' region motif. The 'KMSKS' region signature appears at 295–299 (KISKS). Lys-298 contributes to the ATP binding site.

The protein belongs to the class-I aminoacyl-tRNA synthetase family.

The protein resides in the cytoplasm. The catalysed reaction is tRNA(Lys) + L-lysine + ATP = L-lysyl-tRNA(Lys) + AMP + diphosphate. The polypeptide is Lysine--tRNA ligase (lysS) (Cenarchaeum symbiosum (strain A)).